A 128-amino-acid polypeptide reads, in one-letter code: Phycoerythrin alpha-3 chain, chloroplastic (128 aa).

The N-terminal 52 residues, 1–52 (MFAKTLASLAVIGSAAAYVPMMSMDMGRREVVQAGAAAAAVTPFLSGAPAGA), are a transit peptide targeting the chloroplast. 5-hydroxylysine is present on lysine 56. Positions 70-89 (GCSRAPKESTGGKAGGQDDE) are disordered. 15,16-dihydrobiliverdin is bound by residues cysteine 71, arginine 73, 77–78 (ES), and lysine 93.

This sequence belongs to the phycoerythrin family. In terms of assembly, heterotetramer of 2 different alpha chains and 2 identical beta chains. The subunit composition could comprise of any combination of 2 out of 4 different alpha units with an invariant beta unit. In terms of processing, contains one covalently linked 15,16-dihydrobiliverdin chromophore.

It localises to the plastid. The protein localises to the chloroplast thylakoid membrane. In terms of biological role, light-harvesting photosynthetic tetrapyrrole chromophore-protein from the phycobiliprotein complex. This chain is Phycoerythrin alpha-3 chain, chloroplastic (cpeA3), found in Rhodomonas sp. (strain CS 24) (Chroomonas sp. (strain CS24)).